The sequence spans 37 residues: Cytochrome b6-f complex subunit 5 (37 aa).

A helical membrane pass occupies residues 5-25 (LLCGIVLGLIPITLMGLFVAA).

It belongs to the PetG family. The 4 large subunits of the cytochrome b6-f complex are cytochrome b6, subunit IV (17 kDa polypeptide, PetD), cytochrome f and the Rieske protein, while the 4 small subunits are PetG, PetL, PetM and PetN. The complex functions as a dimer.

The protein localises to the cellular thylakoid membrane. Functionally, component of the cytochrome b6-f complex, which mediates electron transfer between photosystem II (PSII) and photosystem I (PSI), cyclic electron flow around PSI, and state transitions. PetG is required for either the stability or assembly of the cytochrome b6-f complex. The polypeptide is Cytochrome b6-f complex subunit 5 (Synechococcus sp. (strain CC9311)).